A 441-amino-acid chain; its full sequence is N-succinylarginine dihydrolase (441 aa).

Substrate contacts are provided by residues 19 to 28 (AGLSFGNEAS), asparagine 110, and 137 to 138 (HR). Glutamate 174 is a catalytic residue. Arginine 212 contacts substrate. Histidine 248 is an active-site residue. Substrate-binding residues include aspartate 250 and asparagine 359. The active-site Nucleophile is the cysteine 365.

The protein belongs to the succinylarginine dihydrolase family. As to quaternary structure, homodimer.

The enzyme catalyses N(2)-succinyl-L-arginine + 2 H2O + 2 H(+) = N(2)-succinyl-L-ornithine + 2 NH4(+) + CO2. It participates in amino-acid degradation; L-arginine degradation via AST pathway; L-glutamate and succinate from L-arginine: step 2/5. In terms of biological role, catalyzes the hydrolysis of N(2)-succinylarginine into N(2)-succinylornithine, ammonia and CO(2). This chain is N-succinylarginine dihydrolase, found in Cronobacter sakazakii (strain ATCC BAA-894) (Enterobacter sakazakii).